Reading from the N-terminus, the 301-residue chain is Haloalkane dehalogenase (301 aa).

The active-site Nucleophile is the Asp123. The active-site Proton donor is Asp250. The active-site Proton acceptor is His279.

Belongs to the haloalkane dehalogenase family. Type 1 subfamily. Monomer.

The enzyme catalyses 1-haloalkane + H2O = a halide anion + a primary alcohol + H(+). Its function is as follows. Catalyzes hydrolytic cleavage of carbon-halogen bonds in halogenated aliphatic compounds, leading to the formation of the corresponding primary alcohols, halide ions and protons. The polypeptide is Haloalkane dehalogenase (Phenylobacterium zucineum (strain HLK1)).